Here is a 331-residue protein sequence, read N- to C-terminus: Tetraacyldisaccharide 4'-kinase (331 aa).

Residue 55–62 coordinates ATP; it reads TAGGNGKT.

It belongs to the LpxK family.

The enzyme catalyses a lipid A disaccharide + ATP = a lipid IVA + ADP + H(+). It participates in glycolipid biosynthesis; lipid IV(A) biosynthesis; lipid IV(A) from (3R)-3-hydroxytetradecanoyl-[acyl-carrier-protein] and UDP-N-acetyl-alpha-D-glucosamine: step 6/6. Functionally, transfers the gamma-phosphate of ATP to the 4'-position of a tetraacyldisaccharide 1-phosphate intermediate (termed DS-1-P) to form tetraacyldisaccharide 1,4'-bis-phosphate (lipid IVA). The sequence is that of Tetraacyldisaccharide 4'-kinase from Edwardsiella ictaluri (strain 93-146).